Reading from the N-terminus, the 86-residue chain is Translation machinery-associated protein 10 (86 aa).

Phosphoserine occurs at positions 28 and 79. Positions 63 to 86 are disordered; the sequence is NKTRRGSNSQNNERRLSDLQQYHI.

Belongs to the STF2 family. As to quaternary structure, associates with ribosomes.

It is found in the cytoplasm. It localises to the nucleus. Its function is as follows. May be involved in inhibition of the reverse ATPase reaction of mitochondrial F(1)F(0)-type ATP synthase. In Saccharomyces cerevisiae (strain ATCC 204508 / S288c) (Baker's yeast), this protein is Translation machinery-associated protein 10.